Here is a 179-residue protein sequence, read N- to C-terminus: MASSDTAEATRRDFLYVATAAVGAAGVAAVAWPFITQMNPDAATIAAGAPIDIDISPVTEGQIVRVFWRGKPIFIRHRTAKEIQSEEAADVGALIDPQPDSARVKPGKAEWLVVYASCTHLGCIPLGHQGDWGGWFCPCHGSQYDASGRVRKGPAPTNLPVPPYEFVDNTKIRIGAGVA.

Residues 14-35 (FLYVATAAVGAAGVAAVAWPFI) traverse the membrane as a helical segment. Residues 80–173 (AKEIQSEEAA…YEFVDNTKIR (94 aa)) form the Rieske domain. The [2Fe-2S] cluster site is built by Cys-118, His-120, Cys-137, and His-140. Cys-123 and Cys-139 are joined by a disulfide.

It belongs to the Rieske iron-sulfur protein family. In terms of assembly, the main subunits of complex b-c1 are: cytochrome b, cytochrome c1 and the Rieske protein. Requires [2Fe-2S] cluster as cofactor.

The protein resides in the cell membrane. It catalyses the reaction a quinol + 2 Fe(III)-[cytochrome c](out) = a quinone + 2 Fe(II)-[cytochrome c](out) + 2 H(+)(out). Functionally, component of the ubiquinol-cytochrome c reductase complex (complex III or cytochrome b-c1 complex), which is a respiratory chain that generates an electrochemical potential coupled to ATP synthesis. In Blastochloris viridis (Rhodopseudomonas viridis), this protein is Ubiquinol-cytochrome c reductase iron-sulfur subunit (petA).